A 49-amino-acid chain; its full sequence is Large ribosomal subunit protein bL33A (49 aa).

This sequence belongs to the bacterial ribosomal protein bL33 family.

This is Large ribosomal subunit protein bL33A from Lactobacillus johnsonii (strain CNCM I-12250 / La1 / NCC 533).